The sequence spans 371 residues: 4-hydroxybenzoate polyprenyltransferase, mitochondrial (371 aa).

The N-terminal 45 residues, M1–P45, are a transit peptide targeting the mitochondrion. At S46–P83 the chain is on the mitochondrial matrix side. A helical transmembrane segment spans residues I84–G104. The Mitochondrial intermembrane portion of the chain corresponds to C105–D108. Residues W109–I129 form a helical membrane-spanning segment. The Mitochondrial matrix portion of the chain corresponds to N130 to L171. Residues G172–V192 traverse the membrane as a helical segment. The Mitochondrial intermembrane portion of the chain corresponds to T193–R200. Residues I201–W221 traverse the membrane as a helical segment. At S222 to S231 the chain is on the mitochondrial matrix side. Residues V232–A252 form a helical membrane-spanning segment. Over H253–K277 the chain is Mitochondrial intermembrane. The helical transmembrane segment at W278–G298 threads the bilayer. At Q299–T300 the chain is on the mitochondrial matrix side. The chain crosses the membrane as a helical span at residues M301–L321. The Mitochondrial intermembrane segment spans residues D322–K332. The helical transmembrane segment at F333 to C353 threads the bilayer. Residues K354 to N371 lie on the Mitochondrial matrix side of the membrane.

The protein belongs to the UbiA prenyltransferase family. Requires Mg(2+) as cofactor.

It localises to the mitochondrion inner membrane. The catalysed reaction is an all-trans-polyprenyl diphosphate + 4-hydroxybenzoate = a 4-hydroxy-3-(all-trans-polyprenyl)benzoate + diphosphate. It catalyses the reaction all-trans-decaprenyl diphosphate + 4-hydroxybenzoate = 4-hydroxy-3-(all-trans-decaprenyl)benzoate + diphosphate. It carries out the reaction all-trans-nonaprenyl diphosphate + 4-hydroxybenzoate = 4-hydroxy-3-(all-trans-nonaprenyl)benzoate + diphosphate. The protein operates within cofactor biosynthesis; ubiquinone biosynthesis. Functionally, mediates the second step in the final reaction sequence of coenzyme Q (CoQ) biosynthesis. Catalyzes the prenylation of para-hydroxybenzoate (PHB) with an all-trans polyprenyl donor (such as all-trans-decaprenyl diphosphate). The length of the polyprenyl side chain varies depending on the species, in humans, the side chain is comprised of 10 isoprenyls (decaprenyl) producing CoQ10 (also known as ubiquinone), whereas rodents predominantly generate CoQ9. However, this specificity is not complete, human tissues have low amounts of CoQ9 and rodent organs contain some CoQ10. Plays a central role in the biosynthesis of CoQ10. CoQ10 is a vital molecule that transports electrons from mitochondrial respiratory chain complexes. CoQs also function as cofactors for uncoupling protein and play a role as regulators of the extracellularly-induced ceramide-dependent apoptotic pathway. Regulates mitochondrial permeability transition pore (mPTP) opening and ROS production (pivotal events in cell death) in a tissue specific manner. The sequence is that of 4-hydroxybenzoate polyprenyltransferase, mitochondrial from Bos taurus (Bovine).